The primary structure comprises 142 residues: Large ribosomal subunit protein uL13 (142 aa).

The protein belongs to the universal ribosomal protein uL13 family. In terms of assembly, part of the 50S ribosomal subunit.

This protein is one of the early assembly proteins of the 50S ribosomal subunit, although it is not seen to bind rRNA by itself. It is important during the early stages of 50S assembly. The sequence is that of Large ribosomal subunit protein uL13 from Acinetobacter baumannii (strain AB0057).